The sequence spans 544 residues: Dynein axonemal assembly factor 3 (544 aa).

Disordered stretches follow at residues 328-350 (RAAE…PAAP) and 448-544 (TFAR…YPIP). A compositionally biased stretch (polar residues) spans 522–536 (PTGSQAPKSENQTVP).

It belongs to the DNAAF3 family.

The protein resides in the cytoplasm. It localises to the dynein axonemal particle. Its function is as follows. Required for the assembly of axonemal inner and outer dynein arms. Involved in preassembly of dyneins into complexes before their transport into cilia. This chain is Dynein axonemal assembly factor 3 (DNAAF3), found in Bos taurus (Bovine).